Reading from the N-terminus, the 210-residue chain is Na(+)-translocating NADH-quinone reductase subunit D (210 aa).

5 helical membrane passes run 42-62 (FVMT…VSLI), 72-92 (IIVQ…ILKA), 103-123 (VFVG…AFAM), 131-151 (LIDG…VGFF), and 178-198 (NGLM…IWAI).

This sequence belongs to the NqrDE/RnfAE family. Composed of six subunits; NqrA, NqrB, NqrC, NqrD, NqrE and NqrF.

It localises to the cell inner membrane. It carries out the reaction a ubiquinone + n Na(+)(in) + NADH + H(+) = a ubiquinol + n Na(+)(out) + NAD(+). NQR complex catalyzes the reduction of ubiquinone-1 to ubiquinol by two successive reactions, coupled with the transport of Na(+) ions from the cytoplasm to the periplasm. NqrA to NqrE are probably involved in the second step, the conversion of ubisemiquinone to ubiquinol. The protein is Na(+)-translocating NADH-quinone reductase subunit D of Vibrio vulnificus (strain CMCP6).